An 858-amino-acid polypeptide reads, in one-letter code: Polyhomeotic-like protein 2 (858 aa).

6 disordered regions span residues 1–76 (MENE…QYLQ), 230–307 (QQTP…MEGR), 337–388 (PQPS…VALQ), 407–444 (LQCP…PHTP), 473–493 (KEVA…SPHQ), and 529–561 (TDLS…KPPQ). 2 stretches are compositionally biased toward low complexity: residues 10–34 (TSSS…NSSS) and 230–241 (QQTPAAAASGPT). The interaction with BMI1 stretch occupies residues 33 to 53 (SSGGSGRPTGPQISVYSGIPD). The segment covering 265–274 (PAQSRNTAQA) has biased composition (polar residues). Residues 337–358 (PQPSSKHLQPQFVIQQQPQPQQ) show a composition bias toward low complexity. Residues 379–388 (ASVSPSVALQ) show a composition bias toward polar residues. Residues 473 to 483 (KEVAPGEKSVP) show a composition bias toward basic and acidic residues. Over residues 537–551 (TSGNGNSASSIAGTA) the composition is skewed to low complexity. The HD1 signature appears at 558 to 587 (KPPQAIVKPQILTHVIEGFVIQEGAEPFPV). Residues Lys598 and Lys600 each participate in a glycyl lysine isopeptide (Lys-Gly) (interchain with G-Cter in SUMO2) cross-link. At Thr619 the chain carries Phosphothreonine. Ser621 is modified (phosphoserine). Residue Lys632 forms a Glycyl lysine isopeptide (Lys-Gly) (interchain with G-Cter in SUMO2) linkage. The FCS-type zinc finger occupies 633–667 (EEGAPLKLKCELCGRVDFAYKFKRSKRFCSMACAK). Zn(2+) is bound by residues Cys642, Cys645, Cys661, and Cys665. 2 disordered regions span residues 688–720 (QKAG…TGTV) and 732–768 (HSQE…GQRD). A Glycyl lysine isopeptide (Lys-Gly) (interchain with G-Cter in SUMO2) cross-link involves residue Lys702. Phosphoserine is present on Ser751. One can recognise an SAM domain in the interval 794 to 858 (WNVEDVYEFI…YARISMLKDS (65 aa)). Lys847 participates in a covalent cross-link: Glycyl lysine isopeptide (Lys-Gly) (interchain with G-Cter in SUMO2).

In terms of assembly, component of a PRC1-like complex. Interacts with CBX4. Interacts with BMI1, PCGF2, PHC1 and RNF2. Interacts with CHTOP. Interacts with the N-terminal region of the SP1 transcription factor and with MAPKAPK2. Interacts with SAMD7 and SAMD11.

The protein resides in the nucleus. Functionally, component of a Polycomb group (PcG) multiprotein PRC1-like complex, a complex class required to maintain the transcriptionally repressive state of many genes, including Hox genes, throughout development. PcG PRC1 complex acts via chromatin remodeling and modification of histones; it mediates monoubiquitination of histone H2A 'Lys-119', rendering chromatin heritably changed in its expressibility. This is Polyhomeotic-like protein 2 (PHC2) from Homo sapiens (Human).